Here is a 90-residue protein sequence, read N- to C-terminus: Phosphocarrier protein HPr (90 aa).

Positions Met1 to Gly89 constitute an HPr domain. The active-site Pros-phosphohistidine intermediate is His15.

This sequence belongs to the HPr family.

It is found in the cytoplasm. In terms of biological role, general (non sugar-specific) component of the phosphoenolpyruvate-dependent sugar phosphotransferase system (sugar PTS). This major carbohydrate active-transport system catalyzes the phosphorylation of incoming sugar substrates concomitantly with their translocation across the cell membrane. The phosphoryl group from phosphoenolpyruvate (PEP) is transferred to the phosphoryl carrier protein HPr by enzyme I. Phospho-HPr then transfers it to the PTS EIIA domain. This is Phosphocarrier protein HPr (ptsH) from Pseudomonas putida (Arthrobacter siderocapsulatus).